The following is a 142-amino-acid chain: Large ribosomal subunit protein uL16 (142 aa).

This sequence belongs to the universal ribosomal protein uL16 family. As to quaternary structure, part of the 50S ribosomal subunit.

Binds 23S rRNA and is also seen to make contacts with the A and possibly P site tRNAs. This is Large ribosomal subunit protein uL16 from Fervidobacterium nodosum (strain ATCC 35602 / DSM 5306 / Rt17-B1).